The sequence spans 312 residues: Expansin-A24 (312 aa).

The first 27 residues, 1–27 (MELLKRKLYAKILMMVMVIWIAPMTNG), serve as a signal peptide directing secretion. Residues 31 to 86 (ASHVPGGRPGAHPSHGAHPAHGAHPSHGAHPSHGAHPSHGAHPSHGALPSHGGQVP) are disordered. Over residues 40 to 77 (GAHPSHGAHPAHGAHPSHGAHPSHGAHPSHGAHPSHGA) the composition is skewed to low complexity. Repeat copies occupy residues 42–47 (HPSHGA), 48–53 (HPAHGA), 54–59 (HPSHGA), 60–65 (HPSHGA), 66–71 (HPSHGA), and 72–77 (HPSHGA). A 6 X 6 AA tandem repeats of H-P-S-H-G-A region spans residues 42 to 77 (HPSHGAHPAHGAHPSHGAHPSHGAHPSHGAHPSHGA). In terms of domain architecture, Expansin-like EG45 spans 108-218 (QGACGYGDLH…RRVPCAKIGG (111 aa)). Residues 228 to 307 (HFLMILPYNV…DWKCNGQSFD (80 aa)) enclose the Expansin-like CBD domain.

Belongs to the expansin family. Expansin A subfamily.

It is found in the secreted. The protein localises to the cell wall. Its subcellular location is the membrane. In terms of biological role, causes loosening and extension of plant cell walls by disrupting non-covalent bonding between cellulose microfibrils and matrix glucans. No enzymatic activity has been found. This chain is Expansin-A24 (EXPA24), found in Arabidopsis thaliana (Mouse-ear cress).